Consider the following 227-residue polypeptide: Broad specificity amino-acid racemase RacX (227 aa).

51 to 53 (DRP) provides a ligand contact to substrate. Residue C82 is the Proton donor/acceptor of the active site. Residues 83 to 85 (NTA) and K161 each bind substrate. C191 functions as the Proton donor/acceptor in the catalytic mechanism.

Belongs to the aspartate/glutamate racemases family. As to quaternary structure, homodimer.

The enzyme catalyses an L-alpha-amino acid = a D-alpha-amino acid. The catalysed reaction is (2S,6S)-2,6-diaminopimelate = meso-2,6-diaminopimelate. It catalyses the reaction L-lysine = D-lysine. It carries out the reaction L-arginine = D-arginine. The enzyme catalyses L-ornithine = D-ornithine. The catalysed reaction is L-histidine = D-histidine. It catalyses the reaction L-alanine = D-alanine. It carries out the reaction L-tyrosine = D-tyrosine. The enzyme catalyses L-phenylalanine = D-phenylalanine. The catalysed reaction is L-serine = D-serine. It catalyses the reaction L-glutamine = D-glutamine. It carries out the reaction L-methionine = D-methionine. The enzyme catalyses L-asparagine = D-asparagine. The catalysed reaction is L-homoserine = D-homoserine. In terms of biological role, amino-acid racemase able to utilize a broad range of substrates. Preferentially catalyzes the epimerization of LL-diaminopimelate, as well as the racemization of D-lysine, L-arginine, L-ornithine, L-lysine and D-arginine. Has lower activity against D-ornithine, L-histidine, L-alanine, L-tyrosine, L-phenylalanine, L-serine, L-glutamine, L-methionine, L-asparagine and L-homoserine. Has weak activity against L-norleucine, L-aminobutyric acid and L-norvaline. Has no activity toward nine L-amino acids (Thr, Glu, Asp, Val, Leu, Ile, Trp, Cit and Aad). D-amino acids might be used as components of peptidoglycan and/or be involved in peptidoglycan metabolism and remodeling. The sequence is that of Broad specificity amino-acid racemase RacX (racX) from Bacillus subtilis (strain 168).